A 275-amino-acid chain; its full sequence is Aliphatic sulfonates import ATP-binding protein SsuB 1 (275 aa).

Residues 34 to 260 (ISLTGLEKSF…RHGHPGLCEL (227 aa)) form the ABC transporter domain. 66–73 (GKSGCGKS) lines the ATP pocket.

Belongs to the ABC transporter superfamily. Aliphatic sulfonates importer (TC 3.A.1.17.2) family. As to quaternary structure, the complex is composed of two ATP-binding proteins (SsuB), two transmembrane proteins (SsuC) and a solute-binding protein (SsuA).

The protein resides in the cell inner membrane. It catalyses the reaction ATP + H2O + aliphatic sulfonate-[sulfonate-binding protein]Side 1 = ADP + phosphate + aliphatic sulfonateSide 2 + [sulfonate-binding protein]Side 1.. In terms of biological role, part of the ABC transporter complex SsuABC involved in aliphatic sulfonates import. Responsible for energy coupling to the transport system. This chain is Aliphatic sulfonates import ATP-binding protein SsuB 1, found in Rhizobium johnstonii (strain DSM 114642 / LMG 32736 / 3841) (Rhizobium leguminosarum bv. viciae).